The sequence spans 745 residues: Mitogen-activated protein kinase kinase kinase zak-1 (745 aa).

The Protein kinase domain maps to 31–305 (IQVGDHIGVG…KVMDECEKFM (275 aa)). Residues 37-45 (IGVGTFGAV) and K63 contribute to the ATP site. The active-site Proton acceptor is D159. A coiled-coil region spans residues 307-352 (LEDWKTEIEKQEKNVEKMRKDLEKRREQLEIREKALKQRMKVEQAV). One can recognise an SAM domain in the interval 366–438 (WSEHHTSHWV…MKMIRKLADT (73 aa)). The segment at 693 to 745 (LTRRRRTTTTNSEDTEKSDTNNKTPESQARRVHVHGGKDKWNWKKGKSRPKFT) is disordered. Residues 735–745 (WKKGKSRPKFT) are compositionally biased toward basic residues.

The protein belongs to the protein kinase superfamily. STE Ser/Thr protein kinase family. MAP kinase kinase kinase subfamily. The cofactor is Mg(2+). As to expression, widely expressed; expressed in most tissues, including intestines, muscle and the nervous system.

The protein localises to the cytoplasm. The protein resides in the nucleus. The catalysed reaction is L-seryl-[protein] + ATP = O-phospho-L-seryl-[protein] + ADP + H(+). It catalyses the reaction L-threonyl-[protein] + ATP = O-phospho-L-threonyl-[protein] + ADP + H(+). Functionally, stress-activated component of a protein kinase signal transduction cascade that promotes programmed cell death in response to ribotoxic stress. Acts as the proximal sensor of ribotoxic stress: directly binds to the ribosome, thereby acting as a sentinel for colliding ribosomes. Upon ribosome collisions, activates the stress-activated protein kinase signal transduction cascade, leading to programmed cell death. Acts by catalyzing phosphorylation of MAP kinase kinases, leading to activation of the JNK and MAP kinase p38 pathways. In Caenorhabditis elegans, this protein is Mitogen-activated protein kinase kinase kinase zak-1.